A 406-amino-acid polypeptide reads, in one-letter code: Acetate kinase (406 aa).

N10 lines the Mg(2+) pocket. Residue K17 coordinates ATP. R92 contacts substrate. Catalysis depends on D151, which acts as the Proton donor/acceptor. ATP contacts are provided by residues 211-215, 286-288, and 335-339; these read HLGSG, DFR, and GIGEN. E389 is a binding site for Mg(2+).

The protein belongs to the acetokinase family. Homodimer. Mg(2+) is required as a cofactor. The cofactor is Mn(2+).

The protein resides in the cytoplasm. It catalyses the reaction acetate + ATP = acetyl phosphate + ADP. The protein operates within metabolic intermediate biosynthesis; acetyl-CoA biosynthesis; acetyl-CoA from acetate: step 1/2. Functionally, catalyzes the formation of acetyl phosphate from acetate and ATP. Can also catalyze the reverse reaction. In Buchnera aphidicola subsp. Cinara cedri (strain Cc), this protein is Acetate kinase.